A 77-amino-acid chain; its full sequence is Small ribosomal subunit protein bS18 (77 aa).

Belongs to the bacterial ribosomal protein bS18 family. Part of the 30S ribosomal subunit. Forms a tight heterodimer with protein bS6.

In terms of biological role, binds as a heterodimer with protein bS6 to the central domain of the 16S rRNA, where it helps stabilize the platform of the 30S subunit. The chain is Small ribosomal subunit protein bS18 from Lactobacillus helveticus (strain DPC 4571).